A 703-amino-acid chain; its full sequence is Meiotic coiled-coil protein 2 (703 aa).

Polar residues-rich tracts occupy residues 1-19 (MQSIDLRLPSTSANHSISE) and 245-258 (TNVRYSNSKPSTPL). Disordered stretches follow at residues 1-29 (MQSIDLRLPSTSANHSISESLEHSKSELN), 245-265 (TNVRYSNSKPSTPLSPEDVDL), and 284-309 (ASTNNLSTNTSGTLKPYSLSSSRSSS). The region spanning 331–686 (NPSVIPESTS…KVAYLVEKWN (356 aa)) is the PUM-HD domain. 8 Pumilio repeats span residues 361–396 (NVIIDKIIVSNDQQSSIFLQQKLKISSYDMKQNIVD), 397–432 (SIISQIHPLMLNRFGNFLVQRCFEHGTAPQIRQMGS), 433–468 (AMLGNMLKLATDPFGCHVVQKAIDNVTEDIKLAMMD), 469–504 (ELFLTIDVTIMHHYACHVWQKLFETQWYEYPVNVMN), 509–544 (ALRGKWHEVAVGENGSLVVQNMFENCVEKDKRECIE), 545–580 (EIIFHLDGIARGQWGNWVVQHMVENGQGEDLKRVID), 581–616 (ALLNRAVEFSIDQFASKVIEKAIKSGPKNFISLYLK), and 625–660 (RTRQPLIDIASDQYGNYLIQQIIQLGQPAEKNLVIT).

In Schizosaccharomyces pombe (strain 972 / ATCC 24843) (Fission yeast), this protein is Meiotic coiled-coil protein 2 (mcp2).